The sequence spans 322 residues: MSKTYIGIDIAKNTFDACFITHNTWQNCTFTNNQQGFIELTLWIQAHHYNTSTLHLIIEATGAYWEKLAHWAISHHHKVSIVNPLYIHAYAKSLGIRTKTDKQDAILLARYGAKENPPLWQPKSDNEIKLTALLKQREHHKRQLIKERTRQEALSIYVKSYTDDNIRHWSDSITQLDHQIWQLINCTPELNYRASLLATIPGIGKKTLPHLLVVIGDGSSFQSAKHLASYAGLAPRHHQSGISIHKQSSIGFSGQKELRSALFMPAVIVSFGRYPAFQKFVKRMEQKGKTKKQIIIAIMRKLLTISYAVIRQNRPFDKRIHE.

Its function is as follows. May be the site-specific invertase required for pilin gene inversion. Moraxella can express either a Q or I pilin; the inversion of 2 kb of DNA determines which pilin is expressed. The protein is Pilin gene-inverting protein (piv) of Moraxella lacunata.